The primary structure comprises 443 residues: Xaa-Pro dipeptidase (443 aa).

Mn(2+)-binding residues include D246, D257, H339, E384, and E423.

The protein belongs to the peptidase M24B family. Bacterial-type prolidase subfamily. The cofactor is Mn(2+).

It catalyses the reaction Xaa-L-Pro dipeptide + H2O = an L-alpha-amino acid + L-proline. Splits dipeptides with a prolyl residue in the C-terminal position. This Yersinia pseudotuberculosis serotype I (strain IP32953) protein is Xaa-Pro dipeptidase.